The following is a 201-amino-acid chain: Small ribosomal subunit protein uS5 (201 aa).

The disordered stretch occupies residues 1-28 (MAGPQRRGSGAGGGERRDRKGRDGGAGA). The span at 14-23 (GERRDRKGRD) shows a compositional bias: basic and acidic residues. Residues 34-97 (YVERVVAINR…EEAKKHFFKV (64 aa)) enclose the S5 DRBM domain.

It belongs to the universal ribosomal protein uS5 family. Part of the 30S ribosomal subunit. Contacts proteins S4 and S8.

In terms of biological role, with S4 and S12 plays an important role in translational accuracy. Functionally, located at the back of the 30S subunit body where it stabilizes the conformation of the head with respect to the body. This chain is Small ribosomal subunit protein uS5, found in Streptomyces coelicolor (strain ATCC BAA-471 / A3(2) / M145).